A 737-amino-acid chain; its full sequence is MAQYALEAGVSWLATSVSVVASGTWQFAKWTHKYVMQQAEELEADEPEESYFQQMVDKEKEFHNYVRQQIICMWLFMLLYLFAYWLISRLKRKTEREALYAGEEDYFVYRVSVWISSTATATSIGSLTLLPFSVIGVELLQLYDGNYYLQWLSYSLIGALWNYVFVLSNVSLFVLLPFSYFFIESQGFSTSKIGNDMTQRIYEAMAISFLFAFVLLCLAEVVLTILDYPVSFLSITSVNLPLIYSCVSFIGAVLLLISTPYGFAKMFSLARDFLVTEETADIEEENSEQSEDVTEPKNSSSDETIHQVDRSDTPHLEDVVNDITENVDADGEFRKDSDSGIESGSTEEMRLNTDDEEMGINDSDDKSAFGDDGDLGNSTPTKNKKKRRKHDYAATTPIVRKWDKDVPKKPKNPNFDYRNLKEYVKEARRQRSSLSESDDYWFGSPPRSSFSANYYSSRFSRWKHNSETGLNPSSSLLVDPFASGDFHEASSSEASSTPLSPARRTKSEEAIWKPVLHTVKSSKLYKRAIEKQGRLVKLFMSLRFPVAAAALLVLTTCSLIMVATNTLKLLFGYRSLPVYAQYIEVHTRHSFGLFGACIETLLIIYVMITSFVGLYSLPVLRSLRPVRKDTPMPTIIINSSIVLVVASALPVAVNTVGMTTFDLLGSHSSLQWLGSFRVVVAYNTLFVVLSVAFLFNQLTASMRRQIWKWICQLRCGIRRESDADETIEILRGDKKSN.

Over residues 280–293 the composition is skewed to acidic residues; the sequence is ADIEEENSEQSEDV. Residues 280–416 are disordered; that stretch reads ADIEEENSEQ…PKKPKNPNFD (137 aa). Positions 303 to 318 are enriched in basic and acidic residues; that stretch reads ETIHQVDRSDTPHLED.

Belongs to the LIMR family.

This Caenorhabditis elegans protein is LIMR family protein R05D3.2.